Consider the following 313-residue polypeptide: Probable alpha-L-glutamate ligase (313 aa).

The region spanning 112 to 294 is the ATP-grasp domain; that stretch reads LQMLMAQGIA…IALQMIVHLE (183 aa). ATP is bound by residues lysine 148, 185-186, aspartate 194, and 218-220; these read EF and RAN. Mg(2+) contacts are provided by aspartate 255, glutamate 267, and asparagine 269. Residues aspartate 255, glutamate 267, and asparagine 269 each coordinate Mn(2+).

The protein belongs to the RimK family. Mg(2+) serves as cofactor. The cofactor is Mn(2+).

This chain is Probable alpha-L-glutamate ligase, found in Pasteurella multocida (strain Pm70).